The primary structure comprises 953 residues: GATA zinc finger domain-containing protein 14 (953 aa).

Residues 1–21 show a composition bias toward polar residues; the sequence is MFEKIPNQNSHSMGDNNTGYY. 2 disordered regions span residues 1-109 and 216-756; these read MFEK…SPNR and TYGS…TQPQ. Positions 22–89 are enriched in low complexity; sequence NNNNNNNNNN…QLPSPQLSQP (68 aa). A compositionally biased stretch (polar residues) spans 90 to 109; sequence NSMNTTPNQTSPNLRSSPNR. 3 stretches are compositionally biased toward low complexity: residues 219–330, 342–683, and 690–756; these read SSNT…VNAN, NIYN…PNSS, and GNNG…TQPQ. Residues 893–918 form a GATA-type zinc finger; that stretch reads CTSCGTTQTPEWRKGPAGGKSLCNAC. The segment at 934-953 is disordered; the sequence is KVETTSSPPSTSMNVVNLLN.

The polypeptide is GATA zinc finger domain-containing protein 14 (gtaN) (Dictyostelium discoideum (Social amoeba)).